Reading from the N-terminus, the 138-residue chain is ATP synthase epsilon chain, chloroplastic (138 aa).

It belongs to the ATPase epsilon chain family. F-type ATPases have 2 components, CF(1) - the catalytic core - and CF(0) - the membrane proton channel. CF(1) has five subunits: alpha(3), beta(3), gamma(1), delta(1), epsilon(1). CF(0) has three main subunits: a, b and c.

It localises to the plastid. It is found in the chloroplast thylakoid membrane. Produces ATP from ADP in the presence of a proton gradient across the membrane. This chain is ATP synthase epsilon chain, chloroplastic, found in Galdieria sulphuraria (Red alga).